The primary structure comprises 31 residues: Zinc metalloproteinase alsophinase (31 aa).

Pyrrolidone carboxylic acid is present on glutamine 1. Positions 9 to 31 (KYIEFYLVVDNGMFXKYSXXFTV) constitute a Peptidase M12B domain. Glutamate 12 contributes to the Ca(2+) binding site.

In terms of assembly, monomer. Zn(2+) serves as cofactor. In terms of processing, contains 9 disulfide bonds. Expressed by the venom gland.

It localises to the secreted. With respect to regulation, inhibited by 1,10-phenanthroline. Functionally, snake venom zinc metalloprotease that has potent hemorrhagic activity, fibrinogenolytic activity on the alpha-subunit of human fibrinogen (FGA) in vitro and provokes necrosis in skin, muscle and lung tissues. May contribute to local edema and ecchymosis induced by venom. Hydrolyzes model substrate (beta-chain of insulin) at Ala(14)-Leu(15). The chain is Zinc metalloproteinase alsophinase from Borikenophis portoricensis (Puerto Rican racer).